The primary structure comprises 268 residues: Nickel import ATP-binding protein NikE (268 aa).

In terms of domain architecture, ABC transporter spans 4–252; sequence LNVSDLSHHY…SSDAGRVLQN (249 aa). Position 45 to 52 (45 to 52) interacts with ATP; sequence GRSGCGKS.

Belongs to the ABC transporter superfamily. Nickel importer (TC 3.A.1.5.3) family. In terms of assembly, the complex is composed of two ATP-binding proteins (NikD and NikE), two transmembrane proteins (NikB and NikC) and a solute-binding protein (NikA).

It is found in the cell inner membrane. The catalysed reaction is Ni(2+)(out) + ATP + H2O = Ni(2+)(in) + ADP + phosphate + H(+). Functionally, part of the ABC transporter complex NikABCDE involved in nickel import. Responsible for energy coupling to the transport system. The chain is Nickel import ATP-binding protein NikE from Escherichia coli O6:K15:H31 (strain 536 / UPEC).